Here is a 779-residue protein sequence, read N- to C-terminus: Cysteine-rich protein 2-binding protein (779 aa).

The disordered stretch occupies residues 1–34; the sequence is MDSSIHLSGLLSRHDDDATRTSTSEGLEEGEVEG. Serine 4 is subject to Phosphoserine. Lysine 230 is subject to N6-acetyllysine. Disordered stretches follow at residues 247 to 292, 314 to 345, and 360 to 457; these read SRNP…PVKF, LSSS…HSAT, and PPQA…GPRY. Basic and acidic residues predominate over residues 255 to 275; sequence MELKEKRSRTQEAKDIRRAQK. Serine 284 is modified (phosphoserine). N6-acetyllysine is present on lysine 291. The segment covering 314 to 334 has biased composition (low complexity); the sequence is LSSSDRTPLTSPSPSPSLDFS. Composition is skewed to basic and acidic residues over residues 402-423 and 443-452; these read RAPE…RMDG and KPPLEKDMKP. At serine 413 the chain carries Phosphoserine. Residues 635–779 enclose the N-acetyltransferase domain; sequence LDYCYVRPNH…KHAFFLRLRR (145 aa).

In terms of assembly, interacts with the LIM 1 domain of CSRP2. Component of the ADA2A-containing complex (ATAC), composed of CSRP2BP, KAT2A, TADA2L, TADA3L, ZZ3, MBIP, WDR5, YEATS2, CCDC101 and DR1. In the complex, it probably interacts directly with KAT2A, MBIP and WDR5.

The protein resides in the nucleus. Its subcellular location is the cytoplasm. In terms of biological role, component of the ATAC complex, a complex with histone acetyltransferase activity on histones H3 and H4. May function as a scaffold for the ATAC complex to promote ATAC complex stability. Has also weak histone acetyltransferase activity toward histone H4. Required for the normal progression through G1 and G2/M phases of the cell cycle. The protein is Cysteine-rich protein 2-binding protein of Mus musculus (Mouse).